Consider the following 619-residue polypeptide: ATP-dependent zinc metalloprotease FtsH (619 aa).

The Cytoplasmic segment spans residues 1–11 (MSNTDPQPPQK). The helical transmembrane segment at 12 to 32 (LPLNWVVWTLAVALMLYYLPA) threads the bilayer. Topologically, residues 33-120 (MRDRPEPAIK…EVKEGHDASS (88 aa)) are periplasmic. Residues 121-141 (SKVILLSYLPWIMFMIILFWL) traverse the membrane as a helical segment. Residues 142 to 619 (SRRTFRNFSG…IDECLQTGAS (478 aa)) are Cytoplasmic-facing. 216-223 (GPPGTGKT) contacts ATP. Residue H437 coordinates Zn(2+). E438 is an active-site residue. Residues H441 and D513 each coordinate Zn(2+).

It in the central section; belongs to the AAA ATPase family. In the C-terminal section; belongs to the peptidase M41 family. Homohexamer. Zn(2+) is required as a cofactor.

It is found in the cell inner membrane. In terms of biological role, acts as a processive, ATP-dependent zinc metallopeptidase for both cytoplasmic and membrane proteins. Plays a role in the quality control of integral membrane proteins. In Hahella chejuensis (strain KCTC 2396), this protein is ATP-dependent zinc metalloprotease FtsH.